A 109-amino-acid chain; its full sequence is Putative pterin-4-alpha-carbinolamine dehydratase (109 aa).

This sequence belongs to the pterin-4-alpha-carbinolamine dehydratase family.

The catalysed reaction is (4aS,6R)-4a-hydroxy-L-erythro-5,6,7,8-tetrahydrobiopterin = (6R)-L-erythro-6,7-dihydrobiopterin + H2O. This is Putative pterin-4-alpha-carbinolamine dehydratase from Vibrio cholerae serotype O1 (strain ATCC 39315 / El Tor Inaba N16961).